The chain runs to 390 residues: MSHRKFEHPRHGSLGFLPRKRASRHRGKVKAFPKDDPTKPCRLTSFLGYKAGMTHIVRDVEKPGSKLHKKETCEAVTIIETPPMVVVGVVGYVKTPRGLRSLCTVWAQHLSEELRRRFYKNWAKSKKKAFTRYSKKHETEEGKKDIQSQLEKMKKYCSVIRVLAHTQIRKMKGLKQKKAHLNEIQINGGDIAKKVDYACSLFEKQVPVDAIFQKDEMIDIIGVTKGKGYEGVVTRWGVTRLPRKTHRGLRKVACIGAWHPARVSYTVARAGQNGYHHRTEMNKKVYRVGKVGQETHSAMTEYDRTEKDITPMGGFPHYGIVKEDYLMIKGCCVGPKKRVVTLRQTLLKQTSRLAMEEIKLKFIDAASNGGHGRFQTSQEKAKFYGRTIKA.

The interval 1 to 36 (MSHRKFEHPRHGSLGFLPRKRASRHRGKVKAFPKDD) is disordered. A compositionally biased stretch (basic residues) spans 18–31 (PRKRASRHRGKVKA).

The protein belongs to the universal ribosomal protein uL3 family.

It is found in the cytoplasm. This chain is Large ribosomal subunit protein uL3y (ARP2), found in Arabidopsis thaliana (Mouse-ear cress).